The chain runs to 1394 residues: DNA-directed RNA polymerase subunit beta'' (1394 aa).

Zn(2+) is bound by residues C224, C295, C302, and C305.

This sequence belongs to the RNA polymerase beta' chain family. RpoC2 subfamily. In terms of assembly, in plastids the minimal PEP RNA polymerase catalytic core is composed of four subunits: alpha, beta, beta', and beta''. When a (nuclear-encoded) sigma factor is associated with the core the holoenzyme is formed, which can initiate transcription. It depends on Zn(2+) as a cofactor.

It is found in the plastid. The protein localises to the chloroplast. The catalysed reaction is RNA(n) + a ribonucleoside 5'-triphosphate = RNA(n+1) + diphosphate. In terms of biological role, DNA-dependent RNA polymerase catalyzes the transcription of DNA into RNA using the four ribonucleoside triphosphates as substrates. In Vitis vinifera (Grape), this protein is DNA-directed RNA polymerase subunit beta''.